The sequence spans 123 residues: Large ribosomal subunit protein bL21 (123 aa).

It belongs to the bacterial ribosomal protein bL21 family. As to quaternary structure, part of the 50S ribosomal subunit. Contacts protein L20.

In terms of biological role, this protein binds to 23S rRNA in the presence of protein L20. This is Large ribosomal subunit protein bL21 from Rippkaea orientalis (strain PCC 8801 / RF-1) (Cyanothece sp. (strain PCC 8801)).